Reading from the N-terminus, the 358-residue chain is Chorismate synthase (358 aa).

Positions 48 and 54 each coordinate NADP(+). FMN is bound by residues 125 to 127, G282, 297 to 301, and R323; these read RSS and KPPAS.

It belongs to the chorismate synthase family. In terms of assembly, homotetramer. Requires FMNH2 as cofactor.

It carries out the reaction 5-O-(1-carboxyvinyl)-3-phosphoshikimate = chorismate + phosphate. It participates in metabolic intermediate biosynthesis; chorismate biosynthesis; chorismate from D-erythrose 4-phosphate and phosphoenolpyruvate: step 7/7. Functionally, catalyzes the anti-1,4-elimination of the C-3 phosphate and the C-6 proR hydrogen from 5-enolpyruvylshikimate-3-phosphate (EPSP) to yield chorismate, which is the branch point compound that serves as the starting substrate for the three terminal pathways of aromatic amino acid biosynthesis. This reaction introduces a second double bond into the aromatic ring system. This Roseiflexus castenholzii (strain DSM 13941 / HLO8) protein is Chorismate synthase.